The sequence spans 597 residues: Zinc finger CCCH domain-containing protein 29 (597 aa).

ANK repeat units lie at residues 76–106 (EERTPLMVAAMYGSMEVLNYIIATGRSDVNR) and 111–143 (EKVTALHCAVSGCSVSIVEIIKILLDASASPNC). C3H1-type zinc fingers lie at residues 254–281 (PYTCVPCPEFRKGSCPKGDSCEYAHGVF) and 289–313 (QYRTRLCKDETGCARRVCFFAHRRD). The span at 320–337 (ASTGSAMVSPRSSNQSPE) shows a compositional bias: polar residues. Residues 320–341 (ASTGSAMVSPRSSNQSPEMSVM) are disordered.

In terms of tissue distribution, expressed in roots and anthers.

Its subcellular location is the nucleus. Functionally, involved in salt stress response. May positively modulate plant tolerance to salt stress. This Arabidopsis thaliana (Mouse-ear cress) protein is Zinc finger CCCH domain-containing protein 29.